Consider the following 422-residue polypeptide: GTPase Obg (422 aa).

The Obg domain maps to 1–156; sequence MKFIDEVNVL…FALRLVLKVL (156 aa). The region spanning 157–324 is the OBG-type G domain; sequence ADVGLVGKPS…LKAAIFKMLE (168 aa). GTP is bound by residues 163–170, 188–192, 209–212, 278–281, and 305–307; these read GKPSAGKS, FTTLV, DLPG, NKSD, and SAL. 2 residues coordinate Mg(2+): Ser-170 and Thr-190. The 79-residue stretch at 342–420 folds into the OCT domain; it reads NITLDRDALK…IGNFEFDWSD (79 aa).

It belongs to the TRAFAC class OBG-HflX-like GTPase superfamily. OBG GTPase family. Monomer. Mg(2+) serves as cofactor.

The protein resides in the cytoplasm. Its function is as follows. An essential GTPase which binds GTP, GDP and possibly (p)ppGpp with moderate affinity, with high nucleotide exchange rates and a fairly low GTP hydrolysis rate. Plays a role in control of the cell cycle, stress response, ribosome biogenesis and in those bacteria that undergo differentiation, in morphogenesis control. The sequence is that of GTPase Obg from Metamycoplasma arthritidis (strain 158L3-1) (Mycoplasma arthritidis).